We begin with the raw amino-acid sequence, 1403 residues long: Centrosomal protein of 162 kDa (1403 aa).

The interval 20–46 (LSDDSFENSNKTPRQPNEDNKEMKKKD) is disordered. A compositionally biased stretch (basic and acidic residues) spans 35–46 (PNEDNKEMKKKD). A phosphoserine mark is found at S160 and S163. 4 disordered regions span residues 169–243 (LHRY…MLAN), 256–292 (VGLSSQEKATPKAKAPPEITDDGPAETGVPYGQSSGD), 306–348 (SLGD…ESDL), and 453–606 (NPSL…GGNR). Residues 178 to 208 (PAEDGCENESEQEELPETYSDDFEDAEDADD) show a composition bias toward acidic residues. Positions 210–238 (LITKDEETHPKENSESGKDSFPKQEEEKT) are enriched in basic and acidic residues. Positions 485 to 500 (PCKKARSTPSLPKRKP) are enriched in basic residues. Composition is skewed to basic and acidic residues over residues 526–536 (LEKKTSKDNTK) and 571–585 (PHREGSPATPKRPED). Residues 614 to 1124 (KRAQDAEEKW…QKERRMMLSR (511 aa)) are a coiled coil. The segment at 1126–1147 (IPRSREETAAKRLKKDPNRGHG) is disordered. The segment covering 1128–1144 (RSREETAAKRLKKDPNR) has biased composition (basic and acidic residues). Residues 1174–1386 (EENYRLRSEL…LDVLRELHRQ (213 aa)) are a coiled coil.

The protein belongs to the CEP162 family. Interacts with CPNE4. Interacts with alpha-tubulin. Interacts with CEP290.

It localises to the cytoplasm. The protein resides in the cytoskeleton. It is found in the microtubule organizing center. Its subcellular location is the centrosome. The protein localises to the centriole. It localises to the spindle. The protein resides in the nucleus. In terms of biological role, required to promote assembly of the transition zone in primary cilia. Acts by specifically recognizing and binding the axonemal microtubule. Localizes to the distal ends of centrioles before ciliogenesis and directly binds to axonemal microtubule, thereby promoting and restricting transition zone formation specifically at the cilia base. Required to mediate CEP290 association with microtubules. The chain is Centrosomal protein of 162 kDa (Cep162) from Mus musculus (Mouse).